The chain runs to 318 residues: Methionyl-tRNA formyltransferase (318 aa).

112-115 serves as a coordination point for (6S)-5,6,7,8-tetrahydrofolate; the sequence is SILP.

This sequence belongs to the Fmt family.

The enzyme catalyses L-methionyl-tRNA(fMet) + (6R)-10-formyltetrahydrofolate = N-formyl-L-methionyl-tRNA(fMet) + (6S)-5,6,7,8-tetrahydrofolate + H(+). Functionally, attaches a formyl group to the free amino group of methionyl-tRNA(fMet). The formyl group appears to play a dual role in the initiator identity of N-formylmethionyl-tRNA by promoting its recognition by IF2 and preventing the misappropriation of this tRNA by the elongation apparatus. The polypeptide is Methionyl-tRNA formyltransferase (Haemophilus influenzae (strain PittEE)).